A 1269-amino-acid polypeptide reads, in one-letter code: MSSSPSPFGQNEWLVEEMYRKFREDPSSVDPSWHEFLVDYNPEPTTDSSASENGQQTRTAAPKAPPEPAPAPAPKTPDSKTPDSKSQAPKQDSKPQESKPQAKAKPAESKSSTKPADAKSEKSGKSGTNGAAKPAAQPADDSDQNQVLRGAAAAVAKNMSASLDVPTATSVRAIPAKLMIDNRVVINNHLKRTRGGKISFTHLIGYAIVAAVKKFPNMNRHFAEVDGKPNAVTPAHTNLGLAIDLQGKDGNRQLVVAAIKKADTMRFGQFIAAYEDIVRRARDGKLTAEDFSGVTISLTNPGTIGTVHSVPRLMRGQGAIIGVGAMEYPAEFQGASEERIADLGIGKLITLTSTYDHRIIQGAESGDFLRTVHQLLLSDDFFDEIFRELGIPYEPVRWRTDNPDSIEDKNARVIELIAAYRNRGHLMADIDPLRLDSNRFRSHPDLDVLTHGLTLWDLDREFKVNGFAGAERKKLRDVLAVLRDAYCRHIGVEYTHILEPEQQQWLQERIEGKHEKPTVAQQKYILSRLNAAEAFETFLQTKYVGQKRFSLEGAETVIPAMDAVIDQCAEHALDEVVIGMPHRGRLNVLANIVGKPYSQIFSEFEGNLNPSQAHGSGDVKYHLGSSGTYLQMFGDNDITVSLTANPSHLEAVDPVMEGLVRAKQDLLDKGDTEDGYTVVPLMLHGDAAFAGQGVVAETLNLALLRGYRTGGTIHLIVNNQIGFTTSPAAAKSSEYCTDVAKMIGAPIFHVNGDDPEAAVWVSRLAVDFRQKFKKDVVIDLLCYRRRGHNEGDDPSMTQPSMYDVIDTKRGVRKSYTEALIGRGDISMKEAEDALRDYQGQLEQVFNEVRELEKHEIEPSESVEADQQIPAKLATAVDKSLLARIGDAHLAVPEGFTVHPRVKPVLEKRREMAYEGKVDWAFAELLALGTMISEGKLVRLSGQDTRRGTFTQRHSVVIDRKTGKEFTPLQLLATDSDGNPTGGKFLVYDSPLSEFAAVGFEYGYSVGNPDAMVLWEAQFGDFINGAQSIIDEFISSGEAKWGQLSDVVLLLPHGHEGQGPDHTSGRIERFLQLWAEGSMTIALPSTPANYFHLLRRHSLDGIQRPLIVFTPKSMLRNKAAVSDIRDFTEQKFRSVLEEPTYTDGDGDRNKVTRILLTSGKIYYELVARKNKESRDDVAIVRIEQLAPLPKRRLAETLDKYPNVEEKFWVQEEPANQGAWPTFGLTLPEMLPDHFTGIKRISRRAMSAPSSGSSKVHAVEQQEILDEAFAP.

Residues 1 to 41 (MSSSPSPFGQNEWLVEEMYRKFREDPSSVDPSWHEFLVDYN) are 2-oxoglutarate dehydrogenase E1, N-terminal part. A compositionally biased stretch (basic and acidic residues) spans 23 to 37 (REDPSSVDPSWHEFL). Positions 23–145 (REDPSSVDPS…AQPADDSDQN (123 aa)) are disordered. Residues 42–107 (PEPTTDSSAS…SKPQAKAKPA (66 aa)) form a linker region. Over residues 43-58 (EPTTDSSASENGQQTR) the composition is skewed to polar residues. Residues 63–75 (KAPPEPAPAPAPK) are compositionally biased toward pro residues. The interval 108-378 (ESKSSTKPAD…LRTVHQLLLS (271 aa)) is succinyltransferase E2. Residue His-357 is the Proton acceptor; for succinyltransferase activity of the active site. The interval 379-1269 (DDFFDEIFRE…QEILDEAFAP (891 aa)) is 2-oxoglutarate dehydrogenase E1, C-terminal part. Residue Arg-583 participates in thiamine diphosphate binding. 2-oxoglutarate contacts are provided by His-622 and Ser-647. Residues Ser-647, Leu-649, Asp-686, Ala-687, Ala-688, and Asn-719 each coordinate thiamine diphosphate. Asp-686 is a Mg(2+) binding site. Residues Asn-719 and Ile-721 each coordinate Mg(2+). Positions 824 to 855 (DISMKEAEDALRDYQGQLEQVFNEVRELEKHE) form a coiled coil. 2-oxoglutarate is bound at residue His-1061. The acetyl-CoA site is built by Thr-1079, Arg-1095, Lys-1130, Ser-1133, Gln-1183, Arg-1190, and Arg-1191.

This sequence belongs to the 2-oxoacid dehydrogenase family. Kgd subfamily. In terms of assembly, homodimer. The 2-oxoglutarate dehydrogenase (ODH) complex contains multiple copies of three enzymatic components: 2-oxoglutarate dehydrogenase (E1), dihydrolipoamide succinyltransferase (E2) and lipoamide dehydrogenase (E3). The cofactor is Mg(2+). Requires thiamine diphosphate as cofactor.

The catalysed reaction is glyoxylate + 2-oxoglutarate + H(+) = 2-hydroxy-3-oxoadipate + CO2. It catalyses the reaction 2-oxoglutarate + H(+) = succinate semialdehyde + CO2. The enzyme catalyses N(6)-[(R)-lipoyl]-L-lysyl-[protein] + 2-oxoglutarate + H(+) = N(6)-[(R)-S(8)-succinyldihydrolipoyl]-L-lysyl-[protein] + CO2. It carries out the reaction N(6)-[(R)-dihydrolipoyl]-L-lysyl-[protein] + succinyl-CoA = N(6)-[(R)-S(8)-succinyldihydrolipoyl]-L-lysyl-[protein] + CoA. The protein operates within carbohydrate metabolism; tricarboxylic acid cycle; succinate from 2-oxoglutarate (transferase route): step 1/2. Its pathway is carbohydrate metabolism; tricarboxylic acid cycle; succinyl-CoA from 2-oxoglutarate (dehydrogenase route): step 1/1. Its activity is regulated as follows. Alpha-ketoglutarate dehydrogenase and decarboxylase activities are inhibited by unphosphorylated GarA, and allosterically activated by acetyl-CoA, the main substrate of the TCA cycle. Shows three enzymatic activities that share a first common step, the attack of thiamine-PP on 2-oxoglutarate (alpha-ketoglutarate, KG), leading to the formation of an enamine-thiamine-PP intermediate upon decarboxylation. Thus, displays KGD activity, catalyzing the decarboxylation from five-carbon 2-oxoglutarate to four-carbon succinate semialdehyde (SSA). Also catalyzes C-C bond formation between the activated aldehyde formed after decarboxylation of alpha-ketoglutarate and the carbonyl of glyoxylate (GLX), to yield 2-hydroxy-3-oxoadipate (HOA), which spontaneously decarboxylates to form 5-hydroxylevulinate (HLA). And is also a component of the 2-oxoglutarate dehydrogenase (ODH) complex, that catalyzes the overall conversion of 2-oxoglutarate to succinyl-CoA and CO(2). The KG decarboxylase and KG dehydrogenase reactions provide two alternative, tightly regulated, pathways connecting the oxidative and reductive branches of the TCA cycle. The chain is Multifunctional 2-oxoglutarate metabolism enzyme (kgd) from Mycobacterium sp. (strain KMS).